A 384-amino-acid polypeptide reads, in one-letter code: MVEDKKTDDYTIEMDKMDQGSKNFEAAAPPPQPRTPPAGSISNNPILPVLAYCGSSILMTVMNKYVLSGLDFNLNFFLLCVQSIVCIVAIQTCKSCGLITYRDFSADEARKWFPITLLLIGMIYTGSKALQFLSIPVYTIFKNLTIILIAYGEVLWFGGSVTGLTLFSFGLMVLSSIIAAWADIKHAVESTGDATAKVSTLNAGYIWMLVNCLCTSSYVLGMRKRIKLTNFKDFDTLAMFYNNLLSIPVLIVLTGLMEDWSSANITRNFPPADRNNIIFAMILSGLSSVFISYTSAWCVRVTSSTTYSMVGALNKLPIALSGLIFFDAPVTFPSVSAIVVGFVSGIVYAVAKIKQNAKPKTGVLPMSNPPVSASSQSMRDSLRS.

Residues 1-40 lie on the Cytoplasmic side of the membrane; it reads MVEDKKTDDYTIEMDKMDQGSKNFEAAAPPPQPRTPPAGS. Residues 41-61 traverse the membrane as a helical segment; the sequence is ISNNPILPVLAYCGSSILMTV. Residues 62–69 are Lumenal-facing; it reads MNKYVLSG. Residues 70-90 form a helical membrane-spanning segment; sequence LDFNLNFFLLCVQSIVCIVAI. Residues 91–110 are Cytoplasmic-facing; the sequence is QTCKSCGLITYRDFSADEAR. A helical membrane pass occupies residues 111–127; sequence KWFPITLLLIGMIYTGS. The Lumenal portion of the chain corresponds to 128–134; that stretch reads KALQFLS. Residues 135 to 151 traverse the membrane as a helical segment; the sequence is IPVYTIFKNLTIILIAY. Residues 152-160 are Cytoplasmic-facing; it reads GEVLWFGGS. The helical transmembrane segment at 161-182 threads the bilayer; that stretch reads VTGLTLFSFGLMVLSSIIAAWA. Residues 183–200 are Lumenal-facing; sequence DIKHAVESTGDATAKVST. A helical membrane pass occupies residues 201-221; sequence LNAGYIWMLVNCLCTSSYVLG. The Cytoplasmic portion of the chain corresponds to 222–236; it reads MRKRIKLTNFKDFDT. The helical transmembrane segment at 237 to 257 threads the bilayer; the sequence is LAMFYNNLLSIPVLIVLTGLM. At 258–276 the chain is on the lumenal side; that stretch reads EDWSSANITRNFPPADRNN. Asn-264 is a glycosylation site (N-linked (GlcNAc...) asparagine). A helical transmembrane segment spans residues 277–297; that stretch reads IIFAMILSGLSSVFISYTSAW. The Cytoplasmic portion of the chain corresponds to 298-305; sequence CVRVTSST. The chain crosses the membrane as a helical span at residues 306 to 326; sequence TYSMVGALNKLPIALSGLIFF. The Lumenal segment spans residues 327–329; the sequence is DAP. A helical transmembrane segment spans residues 330-350; it reads VTFPSVSAIVVGFVSGIVYAV. Residues 351–384 lie on the Cytoplasmic side of the membrane; it reads AKIKQNAKPKTGVLPMSNPPVSASSQSMRDSLRS. Positions 364–384 are disordered; that stretch reads LPMSNPPVSASSQSMRDSLRS. Polar residues predominate over residues 369–384; the sequence is PPVSASSQSMRDSLRS.

It belongs to the TPT transporter family. SLC35D subfamily. Homooligomer.

Its subcellular location is the golgi apparatus membrane. It is found in the cytoplasmic vesicle membrane. The protein resides in the endoplasmic reticulum membrane. Involved in the import of GDP-mannose from the cytoplasm into the Golgi lumen. The protein is GDP-mannose transporter (gmt1) of Aspergillus terreus (strain NIH 2624 / FGSC A1156).